The primary structure comprises 182 residues: Transcription termination/antitermination protein NusG (182 aa).

The 33-residue stretch at 131 to 163 folds into the KOW domain; it reads VGEQVRIKSGPFANQVGEVQEIEADKFKLTVLV.

It belongs to the NusG family.

Functionally, participates in transcription elongation, termination and antitermination. This Staphylococcus carnosus (strain TM300) protein is Transcription termination/antitermination protein NusG.